A 611-amino-acid chain; its full sequence is uncharacterized protein (611 aa).

The protein belongs to the metallo-dependent hydrolases superfamily. N-acyl-D-amino-acid deacylase family.

This is an uncharacterized protein from Mycobacterium bovis (strain ATCC BAA-935 / AF2122/97).